Consider the following 92-residue polypeptide: Small ribosomal subunit protein uS19c (92 aa).

This sequence belongs to the universal ribosomal protein uS19 family.

Its subcellular location is the plastid. It localises to the chloroplast. In terms of biological role, protein S19 forms a complex with S13 that binds strongly to the 16S ribosomal RNA. The sequence is that of Small ribosomal subunit protein uS19c from Oltmannsiellopsis viridis (Marine flagellate).